A 225-amino-acid polypeptide reads, in one-letter code: Ribonuclease 3 (225 aa).

Residues 4 to 127 (IEKLEQSLTY…IIGAIHLEAG (124 aa)) form the RNase III domain. Residue Glu40 coordinates Mg(2+). Asp44 is an active-site residue. Mg(2+) is bound by residues Asp113 and Glu116. Residue Glu116 is part of the active site. In terms of domain architecture, DRBM spans 154–223 (DYKTKLQEIT…AKIALEKLGS (70 aa)).

It belongs to the ribonuclease III family. In terms of assembly, homodimer. The cofactor is Mg(2+).

The protein resides in the cytoplasm. The enzyme catalyses Endonucleolytic cleavage to 5'-phosphomonoester.. Digests double-stranded RNA. Involved in the processing of primary rRNA transcript to yield the immediate precursors to the large and small rRNAs (23S and 16S). Processes some mRNAs, and tRNAs when they are encoded in the rRNA operon. Processes pre-crRNA and tracrRNA of type II CRISPR loci if present in the organism. The chain is Ribonuclease 3 from Campylobacter jejuni subsp. doylei (strain ATCC BAA-1458 / RM4099 / 269.97).